Consider the following 134-residue polypeptide: Profilin-1 (134 aa).

Cys-13 and Cys-118 are joined by a disulfide. The Involved in PIP2 interaction motif lies at 84–100 (AVVRGKKGSGGITIKKT). The residue at position 114 (Thr-114) is a Phosphothreonine.

The protein belongs to the profilin family. Occurs in many kinds of cells as a complex with monomeric actin in a 1:1 ratio. Post-translationally, phosphorylated by MAP kinases.

It localises to the cytoplasm. It is found in the cytoskeleton. In terms of biological role, binds to actin and affects the structure of the cytoskeleton. At high concentrations, profilin prevents the polymerization of actin, whereas it enhances it at low concentrations. In Olea europaea (Common olive), this protein is Profilin-1.